The sequence spans 443 residues: Differentially expressed in FDCP 8 homolog B (443 aa).

The disordered stretch occupies residues 14–49 (HLNPFDKKGGAERHPADSETQPCKDSSTSSPLSVPE). Positions 17 to 30 (PFDKKGGAERHPAD) are enriched in basic and acidic residues. Residues 31-45 (SETQPCKDSSTSSPL) are compositionally biased toward polar residues. 2 Phorbol-ester/DAG-type zinc fingers span residues 134 to 185 (EHRF…TKPC) and 364 to 424 (IHTT…STSC).

It belongs to the DEF8 family.

Functionally, positively regulates lysosome peripheral distribution and ruffled border formation in osteoclasts. Involved in bone resorption. The polypeptide is Differentially expressed in FDCP 8 homolog B (def8-b) (Xenopus laevis (African clawed frog)).